A 112-amino-acid polypeptide reads, in one-letter code: Large ribosomal subunit protein eL30y (112 aa).

This sequence belongs to the eukaryotic ribosomal protein eL30 family.

This chain is Large ribosomal subunit protein eL30y (RPL30B), found in Arabidopsis thaliana (Mouse-ear cress).